A 337-amino-acid chain; its full sequence is Lipoyl synthase (337 aa).

[4Fe-4S] cluster is bound by residues Cys81, Cys86, Cys92, Cys107, Cys111, Cys114, and Ser323. Positions 93 to 312 (FSHGTATFMI…EDYGNALGFS (220 aa)) constitute a Radical SAM core domain.

This sequence belongs to the radical SAM superfamily. Lipoyl synthase family. [4Fe-4S] cluster serves as cofactor.

The protein localises to the cytoplasm. The enzyme catalyses [[Fe-S] cluster scaffold protein carrying a second [4Fe-4S](2+) cluster] + N(6)-octanoyl-L-lysyl-[protein] + 2 oxidized [2Fe-2S]-[ferredoxin] + 2 S-adenosyl-L-methionine + 4 H(+) = [[Fe-S] cluster scaffold protein] + N(6)-[(R)-dihydrolipoyl]-L-lysyl-[protein] + 4 Fe(3+) + 2 hydrogen sulfide + 2 5'-deoxyadenosine + 2 L-methionine + 2 reduced [2Fe-2S]-[ferredoxin]. The protein operates within protein modification; protein lipoylation via endogenous pathway; protein N(6)-(lipoyl)lysine from octanoyl-[acyl-carrier-protein]: step 2/2. Catalyzes the radical-mediated insertion of two sulfur atoms into the C-6 and C-8 positions of the octanoyl moiety bound to the lipoyl domains of lipoate-dependent enzymes, thereby converting the octanoylated domains into lipoylated derivatives. The sequence is that of Lipoyl synthase from Xanthomonas axonopodis pv. citri (strain 306).